The sequence spans 1032 residues: Leucine-rich repeat and coiled-coil domain-containing protein 1 (1032 aa).

5 LRR repeats span residues 44-65 (TLHA…DHIW), 66-87 (NLQH…NTLT), 88-109 (KLCT…EELI), 110-131 (NLTR…IPLH), and 136-157 (KLRY…LQCM). The LRRCT domain maps to 175–218 (NPVCRLPGYRAVILQTLPQLRILDCKNIFGEPVNLTEINSSQLQ). The segment at 316–345 (DNVLEKDPRPKRDTDITSESDYGNRKECNR) is disordered. Basic and acidic residues predominate over residues 318–330 (VLEKDPRPKRDTD). Residues 421 to 647 (NTYQSLVEQL…DLENEFRIAL (227 aa)) are a coiled coil.

This sequence belongs to the LRRCC1 family.

It localises to the cytoplasm. It is found in the cytoskeleton. The protein localises to the microtubule organizing center. Its subcellular location is the centrosome. The protein resides in the centriole. Functionally, required for the organization of the mitotic spindle. Maintains the structural integrity of centrosomes during mitosis. The sequence is that of Leucine-rich repeat and coiled-coil domain-containing protein 1 (LRRCC1) from Homo sapiens (Human).